Reading from the N-terminus, the 1040-residue chain is Vacuolar membrane protease (1040 aa).

Residues 1-9 (MINPISFRP) lie on the Cytoplasmic side of the membrane. The helical transmembrane segment at 10–30 (GPVTFWTTLIYLALLIPIVII) threads the bilayer. The Vacuolar segment spans residues 31–405 (NEEPPAAPKT…SFVLFGLRGM (375 aa)). N-linked (GlcNAc...) asparagine glycans are attached at residues asparagine 48, asparagine 117, asparagine 120, and asparagine 129. The Zn(2+) site is built by histidine 186 and aspartate 198. Glutamate 232 acts as the Proton acceptor in catalysis. Glutamate 233, glutamate 258, and histidine 331 together coordinate Zn(2+). A helical transmembrane segment spans residues 406–426 (FAWSLTLLIATPLILVGITWL). Residues 427–436 (LRNLDKDYFF) lie on the Cytoplasmic side of the membrane. Residues 437–456 (TSTVKTKEHPEYEAVPIGGW) traverse the membrane as a helical segment. Topologically, residues 457-462 (KGFFRW) are vacuolar. The chain crosses the membrane as a helical span at residues 463–483 (AMMVSIFYFSFWMIMRGANFV). Residues 484–490 (RPSALHR) are Cytoplasmic-facing. Residues 491–511 (GYANLWLFVFGWIVLVAVTAL) traverse the membrane as a helical segment. The Vacuolar portion of the chain corresponds to 512–521 (EDRRRIAAGY). The helical transmembrane segment at 522–542 (IFVFLESAIFLSCLISFVELL) threads the bilayer. The Cytoplasmic portion of the chain corresponds to 543–715 (ALPRKSAYAL…YEHEQDWSGH (173 aa)). Positions 563 to 680 (HSGYQGYRDS…NGTNDRGRTT (118 aa)) are disordered. Composition is skewed to low complexity over residues 577 to 594 (SSGA…PSSP) and 616 to 626 (APSVAAHSSQP). A compositionally biased stretch (polar residues) spans 636–647 (GRSTSAPIPSTT). Positions 650–661 (DEDESEDDDDEA) are enriched in acidic residues. The chain crosses the membrane as a helical span at residues 716–736 (LPSWAWFFQFLLLGPFMIILA). Residues 737–758 (AQTGLMLTDAVYQTGSDGSKLF) are Vacuolar-facing. The helical transmembrane segment at 759 to 779 (TPYLMIFFFTLLLILPLTPFI) threads the bilayer. At 780–785 (HRVTHH) the chain is on the cytoplasmic side. The chain crosses the membrane as a helical span at residues 786–806 (IPVFLLVVFIVTLTYNLIAFP). The Vacuolar segment spans residues 807 to 1040 (FSANNRYKAF…VEGRKAFKIV (234 aa)). An N-linked (GlcNAc...) asparagine glycan is attached at asparagine 900.

Belongs to the peptidase M28 family. Zn(2+) serves as cofactor.

The protein localises to the vacuole membrane. Its function is as follows. May be involved in vacuolar sorting and osmoregulation. In Sordaria macrospora (strain ATCC MYA-333 / DSM 997 / K(L3346) / K-hell), this protein is Vacuolar membrane protease.